Consider the following 692-residue polypeptide: Centrosomal protein of 83 kDa (692 aa).

2 coiled-coil regions span residues 32–625 (RCEH…SLIL) and 656–689 (HLQE…ELGS). Phosphoserine is present on S689.

This sequence belongs to the CEP83 family. As to quaternary structure, interacts with CEP164 and IFT20.

Its subcellular location is the cytoplasm. The protein localises to the cytoskeleton. The protein resides in the microtubule organizing center. It is found in the centrosome. It localises to the centriole. Component of the distal appendage region of the centriole involved in the initiation of primary cilium assembly. May collaborate with IFT20 in the trafficking of ciliary membrane proteins from the Golgi complex to the cilium during the initiation of primary cilium assembly. The polypeptide is Centrosomal protein of 83 kDa (Cep83) (Mus musculus (Mouse)).